We begin with the raw amino-acid sequence, 249 residues long: tRNA (guanine-N(7)-)-methyltransferase (249 aa).

Glu80, Glu105, Asp132, and Asp155 together coordinate S-adenosyl-L-methionine. Asp155 is an active-site residue. Residues Lys159, Asp191, and Thr228–Glu231 contribute to the substrate site.

It belongs to the class I-like SAM-binding methyltransferase superfamily. TrmB family.

It catalyses the reaction guanosine(46) in tRNA + S-adenosyl-L-methionine = N(7)-methylguanosine(46) in tRNA + S-adenosyl-L-homocysteine. It participates in tRNA modification; N(7)-methylguanine-tRNA biosynthesis. Functionally, catalyzes the formation of N(7)-methylguanine at position 46 (m7G46) in tRNA. This is tRNA (guanine-N(7)-)-methyltransferase from Mannheimia succiniciproducens (strain KCTC 0769BP / MBEL55E).